A 347-amino-acid polypeptide reads, in one-letter code: Selenide, water dikinase (347 aa).

Residue Cys16 is part of the active site. ATP-binding positions include Lys19 and 47–49; that span reads TRD. Asp50 contacts Mg(2+). Residues Asp67, Asp90, and 138-140 each bind ATP; that span reads GHS. Asp90 serves as a coordination point for Mg(2+). Asp226 is a Mg(2+) binding site.

The protein belongs to the selenophosphate synthase 1 family. Class I subfamily. Homodimer. Requires Mg(2+) as cofactor.

The enzyme catalyses hydrogenselenide + ATP + H2O = selenophosphate + AMP + phosphate + 2 H(+). In terms of biological role, synthesizes selenophosphate from selenide and ATP. This is Selenide, water dikinase from Photorhabdus laumondii subsp. laumondii (strain DSM 15139 / CIP 105565 / TT01) (Photorhabdus luminescens subsp. laumondii).